We begin with the raw amino-acid sequence, 126 residues long: Nascent polypeptide-associated complex protein (126 aa).

Positions 10 to 77 constitute an NAC-A/B domain; sequence PRMMKQMQKM…AKKVAKAEEK (68 aa).

This sequence belongs to the NAC-alpha family. In terms of assembly, homodimer. Interacts with the ribosome. Binds ribosomal RNA.

Functionally, contacts the emerging nascent chain on the ribosome. The polypeptide is Nascent polypeptide-associated complex protein (Methanococcus maripaludis (strain C6 / ATCC BAA-1332)).